A 776-amino-acid polypeptide reads, in one-letter code: MASKSGKDVTVKVENTNGRGRSRSRSRSRSRARNKNVKITINSKPGASGGQRRRGKPQSDKRVRSIVKQQLDKSGVTGPKPAIRQRATATLGTIGSNSSGKTELEACILTNPILVKDNTGNNTFGPIVALGAQYSLWRIRFLRIKFTPMVGQSAVTGTVVRASLNPTATPSSTGWSGLGARRHIDIVVGKAATFNLKASDLSGPREGWWLTNTNDSGDSTLGPSIEIHTLGTTMSAYQNGPFTGGLFLCELQAEWEFSGYAANPALLSLEKNRDDDAEVSFDGQQGEPLTMVVAEDSLFNKVATRRSTFTRGIARDGQTKSETIWQVVDTAVSAAETVVPPPFGWLIRGGYWFVKKLAGRTKLRNGKQTSSYVCYASYQDALSDKPAICTGVAANFYAGRTETARANLHFTQMNEPSTGVGETPTAFRMYRAAPDDIVYLRFKPETVNISVSPAARLFLARKYTAHSLKVKGNSGTTRIHCVVKVNDPMWYSPDWEQVAQPGPIPGVSLLGGTTTIGIVTAAYQAHMWGLHIATAFIVQVTKDINPACSTSCVLTKELNDQHLKTVAGQTSFNWSLRAGETYLMMSFGAHTSAVGEWVWNDADISVGYTIYNSPLTPCLLLTEGSFHIVLPAKRGLIPLASTELFTVRDQDSIPQTTEPPAEEDVGDNETEDESDDEDLDHFDLHDSSGSEPEDEDVENNRVTLLNTLVNQGVDLARAAKISKRAYPTLAEKTRRSVFMDSLIAGCGPSSAWSEACKAARKVSFKEPISESRGHAE.

A compositionally biased stretch (basic and acidic residues) spans 1-11 (MASKSGKDVTV). The disordered stretch occupies residues 1–64 (MASKSGKDVT…GKPQSDKRVR (64 aa)). The basic stretch occupies residues 1-72 (MASKSGKDVT…VRSIVKQQLD (72 aa)). A compositionally biased stretch (basic residues) spans 20-36 (GRSRSRSRSRSRARNKN). Positions 73 to 265 (KSGVTGPKPA…EFSGYAANPA (193 aa)) are inner core. The tract at residues 401–431 (TETARANLHFTQMNEPSTGVGETPTAFRMYR) is core attachment. The segment at 432–648 (AAPDDIVYLR…LASTELFTVR (217 aa)) is P2 globular domain. The interval 648-698 (RDQDSIPQTTEPPAEEDVGDNETEDESDDEDLDHFDLHDSSGSEPEDEDVE) is disordered. The tract at residues 649–776 (DQDSIPQTTE…PISESRGHAE (128 aa)) is acidic. Positions 660–680 (PAEEDVGDNETEDESDDEDLD) are enriched in acidic residues.

It belongs to the astroviridae capsid polyprotein family. As to quaternary structure, heterodimer with spike protein VP27. The spikes form a globular dimer with 30 spikes covering the mature virion. Spike protein VP25 that lacks the core attachment region may need to dimerize with spike protein VP27 to remain stably bound to the viral particle. In terms of assembly, heterodimer with spike protein VP25. The spikes form a globular dimer with 30 spikes covering the mature virion. Spike protein VP25 that lacks the core attachment region may need to dimerize with spike protein VP27 to remain stably bound to the viral particle. Post-translationally, specific enzymatic cleavages by the host yield mature proteins. VP90 acidic C-terminal domain is eliminated from the immature virion by host caspases during viral maturation giving rise to virions composed of VP70. The virus can then dissociate from cellular membranes and exit the cell. Further cleavages by host extracellular proteases occur resulting in the three structural proteins VP34, VP27 and VP25 and conferring infectivity.

It localises to the virion. The protein resides in the host extracellular space. Its function is as follows. The capsid polyprotein VP90 self-assembles and undergoes a proteolytic cleavage by host caspases to yield the immature VP70 virion. Functionally, the immature virion is composed of 180 VP70 subunits with 90 dimeric spikes and displays a T=3 icosahedral symmetry. During maturation, VP70 undergoes a loss of 60 peripentonal spikes, which likely plays an important role in viral infectivity. Self-assembles to form an icosahedral capsid with a T=3 symmetry, about 43 nm in diameter. This forms contains only 30 spikes located on the icosahedral 2-fold axes. In terms of biological role, VP25 and VP27 Forms the spikes at the surface of the virion. This forms contains only 30 spikes located on the icosahedral 2-fold axes. Plays a role in the attachment to target host cell. This attachment induces virion internalization through clathrin-dependent endocytosis. The polypeptide is Capsid polyprotein VP90 (Sus scrofa (Pig)).